A 305-amino-acid chain; its full sequence is Superkiller complex protein 8 (305 aa).

WD repeat units follow at residues 14 to 57 (AHED…LEMQ), 62 to 101 (GHQL…QIRS), 104 to 143 (AGPV…KEYS), 146 to 187 (TRGK…HTLE), 188 to 227 (GHAM…LAAT), 230 to 269 (GHGS…CVHT), and 272 to 305 (DHQD…DCPI).

Belongs to the SKI8 family. Component of the PAF1 complex. Component of the SKI complex.

It is found in the nucleus. The protein resides in the cytoplasm. Component of the PAF1 complex (PAF1C) which has multiple functions during transcription by RNA polymerase II and is implicated in regulation of development and maintenance of embryonic stem cell pluripotency. PAF1C associates with RNA polymerase II through interaction with POLR2A CTD non-phosphorylated and 'Ser-2'- and 'Ser-5'-phosphorylated forms and is involved in transcriptional elongation, acting both independently and synergistically with TCEA1 and in cooperation with the DSIF complex and HTATSF1. Also acts as a component of the SKI complex, a multiprotein complex that assists the RNA-degrading exosome during the mRNA decay and quality-control pathways. The SKI complex catalyzes mRNA extraction from 80S ribosomal complexes in the 3'-5' direction and channels mRNA to the cytosolic exosome for degradation. In Xenopus laevis (African clawed frog), this protein is Superkiller complex protein 8 (skic8).